The following is a 211-amino-acid chain: Protein DEHYDRATION-INDUCED 19 homolog 7 (211 aa).

A Phosphothreonine modification is found at threonine 113. A disordered region spans residues 163 to 194 (GDSVAQVSPKDTSKSKIQQESFSNEDQEKAKK). The span at 167–186 (AQVSPKDTSKSKIQQESFSN) shows a compositional bias: polar residues.

The protein belongs to the Di19 family. Post-translationally, not phosphorylated in vitro by CPK3 or CPK11. As to expression, expressed in seedlings, roots, leaves, stems, flowers and siliques.

The protein localises to the nucleus. In terms of biological role, involved in both red and blue light signaling. This is Protein DEHYDRATION-INDUCED 19 homolog 7 (DI19-7) from Arabidopsis thaliana (Mouse-ear cress).